The chain runs to 277 residues: S-formylglutathione hydrolase FrmB (277 aa).

Residues Ser-145, Asp-221, and His-254 each act as charge relay system in the active site.

Belongs to the esterase D family.

The catalysed reaction is S-formylglutathione + H2O = formate + glutathione + H(+). In terms of biological role, serine hydrolase involved in the detoxification of formaldehyde. Hydrolyzes S-formylglutathione to glutathione and formate. The polypeptide is S-formylglutathione hydrolase FrmB (frmB) (Escherichia coli O9:H4 (strain HS)).